Here is a 421-residue protein sequence, read N- to C-terminus: Alpha-tubulin N-acetyltransferase 1 (421 aa).

The 190-residue stretch at 1–190 (MEFPFDVDAL…NNFVIFEGFF (190 aa)) folds into the N-acetyltransferase domain. Residue Lys56 is modified to N6-acetyllysine; by autocatalysis. 124 to 137 (FYIHESVQRHGHGR) lines the acetyl-CoA pocket. The residue at position 146 (Lys146) is an N6-acetyllysine; by autocatalysis. 160 to 169 (SPKLLKFLNK) serves as a coordination point for acetyl-CoA. Residues 214–235 (PIPAAPARKLPPKRAEGDIKPY) are disordered. Residues 226–235 (KRAEGDIKPY) are compositionally biased toward basic and acidic residues. N6-acetyllysine; by autocatalysis is present on residues Lys233 and Lys244. The segment at 252-284 (PLNRAPRRATPPAHPPPRSSSLGNSPDRGPLRP) is disordered. Phosphoserine is present on residues Ser272 and Ser276. Arg305 carries the asymmetric dimethylarginine modification. Residue Ser315 is modified to Phosphoserine. Omega-N-methylarginine is present on Arg323. Residues 342 to 351 (FNTSFLGTGN) show a composition bias toward polar residues. The interval 342–398 (FNTSFLGTGNQERKQGEQEAEDRSASEDQVLLQDGSGEEPTHTVAPRAQAPPAQSWM) is disordered. Positions 352-367 (QERKQGEQEAEDRSAS) are enriched in basic and acidic residues.

It belongs to the acetyltransferase ATAT1 family. As to quaternary structure, component of the BBSome complex. Interacts with AP2 alpha-adaptins, including AP2A2, but not with AP1 gamma-adaptin (AP1G1/AP1G2); this interaction is required for efficient alpha-tubulin acetylation, hence clathrin-coated pits are sites of microtubule acetylation. Post-translationally, autoacetylation strongly increases tubulin acetylation.

It is found in the cytoplasm. The protein localises to the membrane. Its subcellular location is the clathrin-coated pit. It localises to the cell junction. The protein resides in the focal adhesion. It is found in the cell projection. The protein localises to the axon. Its subcellular location is the cytoskeleton. It localises to the spindle. It carries out the reaction L-lysyl-[alpha-tubulin] + acetyl-CoA = N(6)-acetyl-L-lysyl-[alpha-tubulin] + CoA + H(+). Functionally, specifically acetylates 'Lys-40' in alpha-tubulin on the lumenal side of microtubules. Promotes microtubule destabilization and accelerates microtubule dynamics; this activity may be independent of acetylation activity. Acetylates alpha-tubulin with a slow enzymatic rate, due to a catalytic site that is not optimized for acetyl transfer. Enters the microtubule through each end and diffuses quickly throughout the lumen of microtubules. Acetylates only long/old microtubules because of its slow acetylation rate since it does not have time to act on dynamically unstable microtubules before the enzyme is released. Required for normal sperm flagellar function. Promotes directional cell locomotion and chemotaxis, through AP2A2-dependent acetylation of alpha-tubulin at clathrin-coated pits that are concentrated at the leading edge of migrating cells. May facilitate primary cilium assembly. This is Alpha-tubulin N-acetyltransferase 1 from Rattus norvegicus (Rat).